A 2073-amino-acid chain; its full sequence is Fatty acid synthase subunit beta (2073 aa).

The interval 1–459 is acetyltransferase; it reads MVEAEQVHQS…VYSTDDAGDL (459 aa). Ser-270 serves as the catalytic For acetyltransferase activity. Residues 470–858 form an enoyl reductase region; sequence ALAVMITEKV…TRGIMFWKEL (389 aa). Ser-1122 is modified (phosphoserine). A dehydratase region spans residues 1155-1644; sequence GPEYTWFRAI…LPNTELITKL (490 aa). His-1361 (for dehydratase activity) is an active-site residue. A MaoC-like domain is found at 1558–1667; sequence PVFVTPPTNS…VEVLNQETSE (110 aa). The segment at 1645–2073 is malonyl/palmitoyl transferase; sequence SHTGMINGRK…LQNWDEYESS (429 aa). The active-site For malonyltransferase activity is Ser-1828. Position 2073 is a phosphoserine (Ser-2073).

The protein belongs to the fungal fatty acid synthetase subunit beta family. In terms of assembly, [Alpha(6)beta(6)] hexamers of two multifunctional subunits (alpha and beta).

It carries out the reaction acetyl-CoA + n malonyl-CoA + 2n NADPH + 4n H(+) = a long-chain-acyl-CoA + n CoA + n CO2 + 2n NADP(+).. It catalyses the reaction holo-[ACP] + acetyl-CoA = acetyl-[ACP] + CoA. The enzyme catalyses holo-[ACP] + malonyl-CoA = malonyl-[ACP] + CoA. The catalysed reaction is a (3R)-hydroxyacyl-[ACP] = a (2E)-enoyl-[ACP] + H2O. It carries out the reaction a 2,3-saturated acyl-[ACP] + NAD(+) = a (2E)-enoyl-[ACP] + NADH + H(+). It catalyses the reaction (9Z)-octadecenoyl-[ACP] + H2O = (9Z)-octadecenoate + holo-[ACP] + H(+). In terms of biological role, fatty acid synthetase catalyzes the formation of long-chain fatty acids from acetyl-CoA, malonyl-CoA and NADPH. The beta subunit contains domains for: [acyl-carrier-protein] acetyltransferase and malonyltransferase, S-acyl fatty acid synthase thioesterase, enoyl-[acyl-carrier-protein] reductase, and 3-hydroxypalmitoyl-[acyl-carrier-protein] dehydratase. In Schizosaccharomyces pombe (strain 972 / ATCC 24843) (Fission yeast), this protein is Fatty acid synthase subunit beta (fas1).